The primary structure comprises 242 residues: Polycomb group RING finger protein 3 (242 aa).

The RING-type zinc-finger motif lies at 17–56; the sequence is CRLCNGYLIDATTVTECLHTFCRSCLVKYLEENNTCPTCR. Residues 120–149 form a disordered region; that stretch reads EAHRNGETKTDEHTHKEPPEEKQEEDHDYH.

As to quaternary structure, component of a PRC1-like complex.

It is found in the nucleus. Component of a Polycomb group (PcG) multiprotein PRC1-like complex, a complex class required to maintain the transcriptionally repressive state of many genes, including Hox genes, throughout development. PcG PRC1 complex acts via chromatin remodeling and modification of histones; it mediates monoubiquitination of histone H2A 'Lys-119', rendering chromatin heritably changed in its expressibility. Within the PRC1-like complex, regulates RNF2 ubiquitin ligase activity. This is Polycomb group RING finger protein 3 (pcgf3) from Xenopus tropicalis (Western clawed frog).